A 494-amino-acid polypeptide reads, in one-letter code: Argininosuccinate synthase, chloroplastic (494 aa).

A chloroplast-targeting transit peptide spans 1–73 (MAEISATSFP…SRSCKNQAIR (73 aa)). Ala-74 carries the N-acetylalanine modification. ATP is bound by residues 102–110 (AYSGGLDTS) and Ala-129. Residues Tyr-181 and Ser-186 each contribute to the L-citrulline site. An ATP-binding site is contributed by Gly-211. 3 residues coordinate L-aspartate: Thr-213, Asn-217, and Asp-218. Asn-217 serves as a coordination point for L-citrulline. Positions 221, 270, 279, 355, and 367 each coordinate L-citrulline.

The protein belongs to the argininosuccinate synthase family. Type 1 subfamily. Homotetramer.

It is found in the plastid. Its subcellular location is the chloroplast. It catalyses the reaction L-citrulline + L-aspartate + ATP = 2-(N(omega)-L-arginino)succinate + AMP + diphosphate + H(+). The protein operates within amino-acid biosynthesis; L-arginine biosynthesis; L-arginine from L-ornithine and carbamoyl phosphate: step 2/3. This Arabidopsis thaliana (Mouse-ear cress) protein is Argininosuccinate synthase, chloroplastic.